The chain runs to 293 residues: Non-structural protein NS-S (293 aa).

The interval 21 to 29 (VRLEPSLGE) is essential for inhibition of IFN-beta activation and interaction with host TBK1. An involved in inclusion bodies formation region spans residues 66–69 (PKNP). Residues 148 to 220 (FEGDMILDSL…KPLLDCWDFF (73 aa)) form an interaction with host TNIP2 region.

Belongs to the Bandavirus NS-S protein family. Interacts with the host E3 ubiquitin ligase TRIM25; this interaction sequesters TRIM25 in NSs-induced cytoplasmic inclusion bodies. Interacts with the host E3 ubiquitin ligase RIGI; this interaction sequesters RIGI in NSs-induced cytoplasmic inclusion bodies. Interacts with the host E3 ubiquitin ligase TBK1 (via N-terminus); this interaction sequesters TBK1 in NSs-induced cytoplasmic inclusion bodies and inhibits TBK1 phosphorylation. NSs does not interact with IKBKE/IKKE or IRF3. Interacts with host IRF7; this interaction sequesters IRF7 in NSs-induced cytoplasmic inclusion bodies. Interacts with host SYNGR2; this interaction is essential to promoting the formation of the inclusion bodies to become virus factories for viral RNA replication through its interaction with NSs. Interacts with host STAT2; this interaction sequesters STAT2 in NSs-induced cytoplasmic inclusion bodies. Interacts with host TNIP2; this interaction promotes TPL2 complex formation and signaling activity leading to IL-10 production. Interacts with host TRIM21 (via B30.2/SPRY domain); this interaction activates host NFE2L2-mediated transcriptional activation of antioxidant genes. Interacts with host CDK1; this interaction is inclusion body dependent, it inhibits the formation and nuclear import of the cyclin B1-CDK1 complex and leads to host cell cycle arrest.

It is found in the host cytoplasm. The protein localises to the host cytoplasmic vesicle. In terms of biological role, sequesters host STAT2 into viral inclusion bodies. Impairs IFN-stimulated phosphorylation and nuclear translocation of host STAT2, thereby suppressing type-I IFN antiviral signaling. Sequesters host TRIM25, RIGI, TBK1/IKK complex components (TBK1, IKBKE/IKKE, and IRF3) and IRF7 into viral inclusion bodies, thereby inhibiting the IFN responses. Inhibits TRIM25-mediated ubiquitination of the RIGI. The sequestration of IKBKE/IKKE, and IRF3 occurs via the interaction with TBK1. Sequestration and inhibition of host TBK1 probably participates to the cytokine storm induced by the virus. Also inhibits the phosphorylation of host TBK1. Interacts with host TNIP2 and promotes TPL2-TNIP2-p105 complex formation leading to IL-10 induction. By interacting with CDK1, induces host cell arrest at the G2/M transition to promote viral replication. Requested for the formation of the viral cytoplasmic inclusion bodies. This is Non-structural protein NS-S (NSS) from SFTS phlebovirus (isolate SFTSV/Human/China/HB29/2010) (Severe fever with thrombocytopenia virus).